We begin with the raw amino-acid sequence, 260 residues long: MGDSILFTVKNEHMALITLNRPQAANALSAEMLRNLQMIIQEIEFNSNIRCVILTGTGEKAFCAGADLKERIKLKEDQVLESVSLIQRTAALLDALPQPVIAAINGSALGGGLELALACDLRIATEAAVLGLPETGLAIIPGAGGTQRLPRLIGRGKAKEFIYTGRRVTAHEAKEIGLVEHVTAPCDLMPKAEELAAAISANGPIAVRQAKFAINKGLETDLATGLAIEQKAYEQTIPTKDRREGLQAFQEKRRAVYKGI.

This sequence belongs to the enoyl-CoA hydratase/isomerase family.

The protein is Putative enoyl-CoA hydratase/isomerase YngF (yngF) of Bacillus subtilis (strain 168).